We begin with the raw amino-acid sequence, 23 residues long: U1-ctenitoxin-Co1a (23 aa).

Residues Cys-10 and Cys-20 are joined by a disulfide bond.

Expressed by the venom gland.

It is found in the secreted. Functionally, insecticidal neurotoxin that reversibly inhibits the N-methyl-D-aspartate (NMDA)-subtype of ionotropic glutamate receptor (GRIN) and inhibits inactivation of insect sodium channels (Nav). In vivo, is highly toxic to insects. The sequence is that of U1-ctenitoxin-Co1a from Ctenus ornatus (Brazilian spider).